We begin with the raw amino-acid sequence, 1705 residues long: MGSRRAPSRGWGAGGRSGAGGDGEDDGPVWIPSPASRSYLLSVRPETSLSSNRLSHPSSGRSTFCSIIAQLTEETQPLFETTLKSRSVSEDSDVRFTCIVTGYPEPEVTWYKDDTELDRYCGLPKYEITHQGNRHTLQLYRCREEDAAIYQASAQNSKGIVSCSGVLEVGTMTEYKIHQRWFAKLKRKAAAKLREIEQSWKHEKAVPGEVDTLRKLSPDRFQRKRRLSGAQAPGPSVPTREPEGGTLAAWQEGETETAQHSGLGLINSFASGEVTTNGEAAPENGEDGEHGLLTYICDAMELGPQRALKEESGAKKKKKDEESKQGLRKPELEKAAQSRRSSENCIPSSDEPDSCGTQGPVGVEQVQTQPRGRAARGPGSSGTDSTRKPASAVGTPDKAQKAPGPGPGQEVYFSLKDMYLENTQAVRPLGEEGPQTLSVRAPGESPKGKAPLRARSEGVPGAPGQPTHSLTPQPTRPFNRKRFAPPKPKGEATTDSKPISSLSQAPECGAQSLGKAPPQASVQVPTPPARRRHGTRDSTLQGQAGHRTPGEVLECQTTTAPTMSASSSSDVASIGVSTSGSQGIIEPMDMETQEDGRTSANQRTGSKKNVQADGKIQVDGRTRGDGTQTAQRTRADRKTQVDAGTQESKRPQSDRSAQKGMMTQGRAETQLETTQAGEKIQEDRKAQADKGTQEDRRMQGEKGMQGEKGTQSEGSAPTAMEGQSEQEVATSLGPPSRTPKLPPTAGPRAPLNIECFVQTPEGSCFPKKPGCLPRSEEAVVTASRNHEQTVLGPLSGNLMLPAQPPHEGSVEQVGGERCRGPQSSGPVEAKQEDSPFQCPKEERPGGVPCMDQGGCPLAGLSQEVPTMPSLPGTGLTASPKAGPCSTPTSQHGSTATFLPSEDQVLMSSAPTLHLGLGTPTQSHPPETMATSSEGACAQVPDVEGRTPGPRSCDPGLIDSLKNYLLLLLKLSSTETSGAGGESQVGAATGGLVPSATLTPTVEVAGLSPRTSRRILERVENNHLVQSAQTLLLSPCTSRRLTGLLDREVQAGRQALAAARGSWGPGPSSLTVPAIVVDEEDPGLASEGASEGEGEVSPEGPGLLGASQESSMAGRLGEAGGQAAPGQGPSAESIAQEPSQEEKFPGEALTGLPAATPEELALGARRKRFLPKVRAAGDGEATTPEERESPTVSPRGPRKSLVPGSPGTPGRERRSPTQGRKASMLEVPRAEEELAAGDLGPSPKAGGLDTEVALDEGKQETLAKPRKAKDLLKAPQVIRKIRVEQFPDASGSLKLWCQFFNILSDSVLTWAKDQRPVGEVGRSAGDEGPAALAIVQASPVDCGVYRCTIHNEHGSASTDFCLSPEVLSGFISREEGEVGEEIEMTPMVFAKGLADSGCWGDKLFGRLVSEELRGGGYGCGLRKASQAKVIYGLEPIFESGRTCIIKVSSLLVFGPSSETSLVGRNYDVTIQGCKIQNMSREYCKIFAAEARAAPGFGEVPEIIPLYLIYRPANNIPYATLEEDLGKPLESYCSREWGCAEAPTASGSSEAMQKCQTFQHWLYQWTNGSFLVTDLAGVDWKMTDVQIATKLRGYQGLKESCFPALLDRFASSHQCNAYCELLGLTPLKGPEAAHPQAKAKGSKSPSAGRKGSQLSPQPQKKGLPSPQGTRKSAPSSKATPQASEPVTTQLLGQPPTQEEGSKAQGMR.

Low complexity predominate over residues 1–10 (MGSRRAPSRG). A disordered region spans residues 1–33 (MGSRRAPSRGWGAGGRSGAGGDGEDDGPVWIPS). The segment covering 11–21 (WGAGGRSGAGG) has biased composition (gly residues). One can recognise an Ig-like 1 domain in the interval 77-168 (PLFETTLKSR…GIVSCSGVLE (92 aa)). Residues 211 to 221 (DTLRKLSPDRF) show a composition bias toward basic and acidic residues. 5 disordered regions span residues 211–244 (DTLR…EPEG), 308–749 (LKEE…GPRA), 792–845 (GPLS…ERPG), 1082–1145 (GLAS…KFPG), and 1173–1226 (RAAG…MLEV). S228 is modified (phosphoserine). Basic and acidic residues predominate over residues 308-342 (LKEESGAKKKKKDEESKQGLRKPELEKAAQSRRSS). The segment covering 370–382 (PRGRAARGPGSSG) has biased composition (low complexity). Positions 495–504 (DSKPISSLSQ) are enriched in polar residues. A compositionally biased stretch (low complexity) spans 557–579 (TTTAPTMSASSSSDVASIGVSTS). Positions 598–609 (TSANQRTGSKKN) are enriched in polar residues. Positions 647–657 (ESKRPQSDRSA) are enriched in basic and acidic residues. Residues 666–676 (RAETQLETTQA) are compositionally biased toward polar residues. The segment covering 679–700 (KIQEDRKAQADKGTQEDRRMQG) has biased composition (basic and acidic residues). Over residues 708–729 (KGTQSEGSAPTAMEGQSEQEVA) the composition is skewed to polar residues. Residues 736 to 745 (SRTPKLPPTA) show a composition bias toward pro residues. Positions 829 to 844 (AKQEDSPFQCPKEERP) are enriched in basic and acidic residues. Positions 1120 to 1131 (GQAAPGQGPSAE) are enriched in low complexity. S1222 carries the phosphoserine modification. Residues 1274-1362 (PQVIRKIRVE…GSASTDFCLS (89 aa)) enclose the Ig-like 2 domain. C1296 and C1346 are oxidised to a cystine. The Alpha-type protein kinase domain occupies 1390–1625 (KGLADSGCWG…YCELLGLTPL (236 aa)). Positions 1628 to 1705 (PEAAHPQAKA…EEGSKAQGMR (78 aa)) are disordered. Polar residues predominate over residues 1664 to 1696 (PQGTRKSAPSSKATPQASEPVTTQLLGQPPTQE).

The protein belongs to the protein kinase superfamily. Alpha-type protein kinase family. ALPK subfamily.

It is found in the nucleus. It catalyses the reaction L-seryl-[protein] + ATP = O-phospho-L-seryl-[protein] + ADP + H(+). It carries out the reaction L-threonyl-[protein] + ATP = O-phospho-L-threonyl-[protein] + ADP + H(+). In terms of biological role, involved in cardiomyocyte differentiation. In Homo sapiens (Human), this protein is Alpha-protein kinase 3.